The chain runs to 244 residues: Adenosylcobinamide-GDP ribazoletransferase (244 aa).

The next 5 helical transmembrane spans lie at 33–53, 57–77, 109–129, 132–152, and 176–196; these read WFAV…WLGA, PWLA…GLHL, FAVI…MLAV, GVGW…AVWW, and FWLS…VLLL.

This sequence belongs to the CobS family. Mg(2+) serves as cofactor.

It is found in the cell inner membrane. The enzyme catalyses alpha-ribazole + adenosylcob(III)inamide-GDP = adenosylcob(III)alamin + GMP + H(+). The catalysed reaction is alpha-ribazole 5'-phosphate + adenosylcob(III)inamide-GDP = adenosylcob(III)alamin 5'-phosphate + GMP + H(+). It functions in the pathway cofactor biosynthesis; adenosylcobalamin biosynthesis; adenosylcobalamin from cob(II)yrinate a,c-diamide: step 7/7. Joins adenosylcobinamide-GDP and alpha-ribazole to generate adenosylcobalamin (Ado-cobalamin). Also synthesizes adenosylcobalamin 5'-phosphate from adenosylcobinamide-GDP and alpha-ribazole 5'-phosphate. This Laribacter hongkongensis (strain HLHK9) protein is Adenosylcobinamide-GDP ribazoletransferase.